The primary structure comprises 189 residues: Lutzicidin (189 aa).

The signal sequence occupies residues 1–22 (MQGFFWKTLLVVALCGTSSSLA). The propeptide occupies 23-155 (HRPLSYGEAL…DEEKDRPKRV (133 aa)). Disulfide bonds link C79-C90 and C101-C118. Acidic residues predominate over residues 125–148 (EEEEEDEEEQKAEVEKDEEKEDEE). The disordered stretch occupies residues 125–152 (EEEEEDEEEQKAEVEKDEEKEDEEKDRP).

Belongs to the cathelicidin family. In terms of tissue distribution, expressed by the venom gland.

It localises to the secreted. Its subcellular location is the target cell membrane. Its function is as follows. Potent antimicrobial peptide against Gram-negative and Gram-positive bacteria. Adopts an amphipathic alpha helical conformation, that may allow to partition into the target membrane. Low hemolytic activities have been observed on mammalian cells. The protein is Lutzicidin of Bothrops lutzi (Sertao lancehead).